The chain runs to 532 residues: Phosphoenolpyruvate carboxykinase (ATP) (532 aa).

Substrate is bound by residues R60, Y194, and K200. Residues K200, H219, and 237-245 (GLSGTGKTT) contribute to the ATP site. K200 and H219 together coordinate Mn(2+). Position 258 (D258) interacts with Mn(2+). ATP contacts are provided by E286, R324, and T449. A substrate-binding site is contributed by R324.

Belongs to the phosphoenolpyruvate carboxykinase (ATP) family. Requires Mn(2+) as cofactor.

The protein resides in the cytoplasm. The enzyme catalyses oxaloacetate + ATP = phosphoenolpyruvate + ADP + CO2. It participates in carbohydrate biosynthesis; gluconeogenesis. Involved in the gluconeogenesis. Catalyzes the conversion of oxaloacetate (OAA) to phosphoenolpyruvate (PEP) through direct phosphoryl transfer between the nucleoside triphosphate and OAA. This is Phosphoenolpyruvate carboxykinase (ATP) from Cereibacter sphaeroides (strain ATCC 17029 / ATH 2.4.9) (Rhodobacter sphaeroides).